The primary structure comprises 1178 residues: MFELNNFDALQIGLASPEQIREWSRGEVKKPETINYRTLKPERDGLFCERIFGPIKDWECHCGKYKRVRYKGIVCDRCGVEVTKSKVRRERMAHIELAAPVSHIWYFKGIPSRMGLILDMSPRALEKVLYFASYIVIDPKETSLLKKQLLNEKEYREACDKYGEESFVAGMGAEAIKTLLSEIDLERTAAELKEELKQSTGQKKVRIIRRLEVVESFKSSGNKPEWMVVDVIPVIPPDLRPMVQLDGGRFATSDLNDLYRRVINRNNRLKKLLDLGAPDIIVRNEKRMLQEAVDALIDNGRRGRPVTGPGNRPLKSLSDMLKGKQGRFRQNLLGKRVDYSGRSVIVVGPELKMYQCGLPKEMALELFKPFVMKKLVEDGVAHNIKSAKRMVERVMPQVWDVLEEVIADHPVLLNRAPTLHRLGIQAFQPVLVEGRAIKLHPLVCTAYNADFDGDQMAVHVPLSVEAQAEARFLMLAAGNIMKPSDGRPVCVPTQDMVLGSYYLTMDKDGAKGEGKYFASFDEVIMAYQLKEVDIHAKINVKVTKEIDGELKSGIIKTTPGFIIFNECIPQDLGFVNRENPEEMFNLEIDFLITKKSLGKIIDKCYLKHGPTKTSIMLDNIKATGYHYSSIGAVTVAASDMIVPQKKYELLKEADETVDKIEKMYRRGLISEDERYERVIEKWTETTEEVADTLMNSLDKFNPIFMMADSGARGSKSQIKQLAGMRGLMASPSGKIIELPIRASFREGLDVLEYFISTHGARKGNADTALKTADSGYLTRRLVDVSQDVIVREHDCGTQNGIYVEEIKEGSEVVEQLAERLTGRYTAEDVFHPETGELLAAKDTYMDPILAEKIADTGIQKVKIRSVFTCDSKVGVCTKCYGMNMATSYKINIGEAVGIVAAQSIGEPGTQLTMRTFHTGGVAGADITQGLPRVEELFEARKPKGLAIVSEVAGTVRIEETKKKRTVYVVTDSGEEYSYDIPFGSRLKVKDGIAIGAGDEITEGSVNPHDIMSIKGVDGAREYLLSEVQKVYRLQGVDINDKHLEVVVRQMTRKIKVTEQGDTNLLPGVMIDMFDFRAENERVESFGGEKAQGDIVLLGITKAALATDSFLSAASFQETTRVLTDAAIKGKIDPLVGLKENVIIGKLIPAGTGMMKYRSLKLNTENSNQETETIIEIEE.

Zn(2+) is bound by residues C60, C62, C75, and C78. Mg(2+) contacts are provided by D450, D452, and D454. Zn(2+)-binding residues include C795, C869, C876, and C879.

This sequence belongs to the RNA polymerase beta' chain family. In terms of assembly, the RNAP catalytic core consists of 2 alpha, 1 beta, 1 beta' and 1 omega subunit. When a sigma factor is associated with the core the holoenzyme is formed, which can initiate transcription. The cofactor is Mg(2+). Zn(2+) is required as a cofactor.

It carries out the reaction RNA(n) + a ribonucleoside 5'-triphosphate = RNA(n+1) + diphosphate. DNA-dependent RNA polymerase catalyzes the transcription of DNA into RNA using the four ribonucleoside triphosphates as substrates. In Clostridium perfringens (strain ATCC 13124 / DSM 756 / JCM 1290 / NCIMB 6125 / NCTC 8237 / Type A), this protein is DNA-directed RNA polymerase subunit beta'.